The sequence spans 94 residues: Large ribosomal subunit protein bL25 (94 aa).

This sequence belongs to the bacterial ribosomal protein bL25 family. In terms of assembly, part of the 50S ribosomal subunit; part of the 5S rRNA/L5/L18/L25 subcomplex. Contacts the 5S rRNA. Binds to the 5S rRNA independently of L5 and L18.

Functionally, this is one of the proteins that binds to the 5S RNA in the ribosome where it forms part of the central protuberance. The polypeptide is Large ribosomal subunit protein bL25 (Enterobacter sp. (strain 638)).